Here is a 52-residue protein sequence, read N- to C-terminus: Troponin C, skeletal muscle (52 aa).

EF-hand domains are found at residues 2–37 and 38–52; these read KSEE…SGEH and VTDE…DGDK. Aspartate 15, asparagine 17, aspartate 19, tyrosine 21, and glutamate 26 together coordinate Ca(2+).

Belongs to the troponin C family.

Troponin is the central regulatory protein of striated muscle contraction. Tn consists of three components: Tn-I which is the inhibitor of actomyosin ATPase, Tn-T which contains the binding site for tropomyosin and Tn-C. The binding of calcium to Tn-C abolishes the inhibitory action of Tn on actin filaments. The polypeptide is Troponin C, skeletal muscle (Protopterus dolloi (Slender lungfish)).